A 206-amino-acid chain; its full sequence is Small ribosomal subunit protein uS4 (206 aa).

Residues 98–163 (MRLDNVVYRL…SEKFKTFVEN (66 aa)) form the S4 RNA-binding domain.

The protein belongs to the universal ribosomal protein uS4 family. Part of the 30S ribosomal subunit. Contacts protein S5. The interaction surface between S4 and S5 is involved in control of translational fidelity.

In terms of biological role, one of the primary rRNA binding proteins, it binds directly to 16S rRNA where it nucleates assembly of the body of the 30S subunit. With S5 and S12 plays an important role in translational accuracy. The sequence is that of Small ribosomal subunit protein uS4 from Clostridium botulinum (strain Alaska E43 / Type E3).